A 174-amino-acid polypeptide reads, in one-letter code: Imidazole glycerol phosphate synthase subunit HisH (174 aa).

Residues 2–174 (SVVIINTGCA…AAVNKDNFWR (173 aa)) enclose the Glutamine amidotransferase type-1 domain. Catalysis depends on cysteine 77, which acts as the Nucleophile.

As to quaternary structure, heterodimer of HisH and HisF.

It is found in the cytoplasm. The enzyme catalyses 5-[(5-phospho-1-deoxy-D-ribulos-1-ylimino)methylamino]-1-(5-phospho-beta-D-ribosyl)imidazole-4-carboxamide + L-glutamine = D-erythro-1-(imidazol-4-yl)glycerol 3-phosphate + 5-amino-1-(5-phospho-beta-D-ribosyl)imidazole-4-carboxamide + L-glutamate + H(+). The catalysed reaction is L-glutamine + H2O = L-glutamate + NH4(+). Its pathway is amino-acid biosynthesis; L-histidine biosynthesis; L-histidine from 5-phospho-alpha-D-ribose 1-diphosphate: step 5/9. Functionally, IGPS catalyzes the conversion of PRFAR and glutamine to IGP, AICAR and glutamate. The HisH subunit catalyzes the hydrolysis of glutamine to glutamate and ammonia as part of the synthesis of IGP and AICAR. The resulting ammonia molecule is channeled to the active site of HisF. This chain is Imidazole glycerol phosphate synthase subunit HisH (hisH), found in Buchnera aphidicola subsp. Schlechtendalia chinensis.